We begin with the raw amino-acid sequence, 530 residues long: Tetrahydroberberine oxidase (530 aa).

The N-terminal stretch at 1–24 (MSKMASSIFATFSLLSSLLPTSLA) is a signal peptide. Residues Cys36 and Cys94 are joined by a disulfide bond. The N-linked (GlcNAc...) asparagine glycan is linked to Asn51. The 175-residue stretch at 72-246 (TTPKPNFIVT…LAWKIRLVPV (175 aa)) folds into the FAD-binding PCMH-type domain. Positions 109-171 (HDFEGLSYVS…GVHAFPAGLC (63 aa)) form a cross-link, 6-(S-cysteinyl)-8alpha-(pros-histidyl)-FAD (His-Cys). N-linked (GlcNAc...) asparagine glycosylation is present at Asn483.

Belongs to the oxygen-dependent FAD-linked oxidoreductase family. FAD is required as a cofactor. Post-translationally, the FAD cofactor is bound via a bicovalent 6-S-cysteinyl, 8alpha-N1-histidyl FAD linkage.

The enzyme catalyses (S)-canadine + 2 O2 + H(+) = berberine + 2 H2O2. Functionally, catalyzes the oxidation of different tetrahydroprotoberberines, such as (S)-canadine, (S)-scoulerine and (S)-corypalmine. Catalyzes the oxidation of (S)-coreximine and (S)-tetrahydropalmatine. Catalyzes the oxidation of different 1-benzylisoquinoline alkaloids, such as (S)-norreticuline, (S)-nororientaline, (S)-coclaurine and (S)-norisoorientaline. Exhibits strict specificity for the (S)-enantiomer of tetrahydroprotoberbirines and 1-benzylisoquinoline alkaloids. The protein is Tetrahydroberberine oxidase of Berberis wilsoniae (Mrs Wilson's barberry).